The primary structure comprises 109 residues: MKFVLLFGVLLVTLFSYSSAEMLDDFDQADEDELLSLIEKEEARAKECTPRFYDCSHDRHSCCRSELFKDVCTCFYPEGGDNKEVCTCQQPKHLKYMEKATDKIKNLFG.

Residues 1–20 form the signal peptide; that stretch reads MKFVLLFGVLLVTLFSYSSA. A propeptide spanning residues 21 to 44 is cleaved from the precursor; sequence EMLDDFDQADEDELLSLIEKEEAR. 4 disulfides stabilise this stretch: cysteine 48-cysteine 63, cysteine 55-cysteine 72, cysteine 62-cysteine 88, and cysteine 74-cysteine 86.

This sequence belongs to the neurotoxin 19 (CSTX) family. 01 subfamily. In terms of tissue distribution, expressed by the venom gland.

The protein localises to the secreted. The polypeptide is U3-lycotoxin-Ls1x (Lycosa singoriensis (Wolf spider)).